The following is a 1749-amino-acid chain: Intraflagellar transport protein 172 homolog (1749 aa).

Met-1 carries the post-translational modification N-acetylmethionine. Lys-4 participates in a covalent cross-link: Glycyl lysine isopeptide (Lys-Gly) (interchain with G-Cter in SUMO1). WD repeat units lie at residues 14–53 (DGAAKVTCMAWSQNNAKFAVCTVDRVVLLYDEHGERRDKF), 64–103 (RKSYMVKGMAFSPDSTKIAIGQTDNIIYVYKIGEDWGDKK), 110–148 (IQTSAVTCLQWPAEYVIVFGLAEGKVRLANTKTNKSSTI), 150–191 (GTES…ESQG), 195–233 (NHPCPPYALAWATNSIVAAGCDRRIVAYGKEGHVLQTFD), 238–278 (PQER…WEEA), 284–323 (ANLYTVTALAWKRDGSRLCAGTLCGGVEQFDCCLRRSIYK), 483–520 (SHESRVDWLELNETGHKLLFRDRKLRLHLYDIESCSKT), and 521–559 (MILNFCSYVQWVPGSDVLVAQNRNSLCVWYNIEAPERVT). A TPR 1 repeat occupies 593-624 (DEGLIEFGTAIDDGNYTRATAFLETLEMTPET). Arg-672 is subject to Omega-N-methylarginine. TPR repeat units follow at residues 692–725 (EKNYKLAEMIFLEQNAVEEAMDMYQELHRWEECI), 809–842 (GELYERAGDLFEKIRNPQRALECYCKGNAFMKAV), 854–887 (VRLEEAWGDHLVQQKQLDAAINHYIEARCSIKAI), 912–945 (SKYYPRVAQHYASLQEYEIAEELYTKGDRTKDAI), 947–970 (MYTQAGRWEQAHKLAMKCMRPEDV), 971–1004 (SVLYITQAQEMEKQGKYREAERLYVTVEEPDLAI), 1042–1075 (EGRLQEAEYHYLEAQEWKATVNMYRSSGLWEEAY), 1142–1175 (PEIHLKYAMYLEDEGKFEEAEAEFIRAGKPKEAV), 1276–1309 (VEGLVEQARQWEQAGEYSRAVDCYLKVRDSGSSG), 1345–1378 (IGKHSAAAELYLNLDLVKEAIDAFIEGEEWNKAK), 1411–1445 (GVDVVAALDLYVEQGQWDKCIETATKQNYKILHKY), 1447–1477 (ALYATHLIREGGYAQALALYVQHGAPANPQN), and 1574–1607 (DKAFYEAGTAAKEVGWENMAFIFLNRFLDLTDAI).

This sequence belongs to the IFT172 family. Interacts with IFT88. Interacts with IFT57. Interacts with RABL2/RABL2A; binds preferentially to GDP-bound RABL2. As to expression, co-localizes with RABL2/RABL2A in the midpiece of elongated spermatids within the testis (at protein level). Expressed in the flagellum of elongated spermatids and sperm in the testis lumen (at protein level).

Its subcellular location is the cell projection. It is found in the cilium. Functionally, required for the maintenance and formation of cilia. Plays an indirect role in hedgehog (Hh) signaling, cilia being required for all activity of the hedgehog pathway. In Mus musculus (Mouse), this protein is Intraflagellar transport protein 172 homolog (Ift172).